The sequence spans 415 residues: Fructose-like permease IIC component (415 aa).

Over 1–46 the chain is Cytoplasmic; sequence MAIKKRSATVVHGASGAAAAVKNPQASKSSFWGELPQHVMSGISRM. Positions 35–415 constitute a PTS EIIC type-2 domain; sequence LPQHVMSGIS…RKGKLLIESL (381 aa). A helical membrane pass occupies residues 47–67; that stretch reads VPTLIMGGVILAFSQLIAYSW. Residues 68-101 lie on the Periplasmic side of the membrane; that stretch reads LKIPADIGIMDALNSGKFSGFDLSLLKFAWLSQS. Residues 102 to 122 form a helical membrane-spanning segment; that stretch reads FGGVLFGFAIPMFAAFVANSI. Residues 123–126 are Cytoplasmic-facing; that stretch reads GGKL. A helical membrane pass occupies residues 127–147; that stretch reads AFPAGFIGGLMSTQPTQLLNF. Residues 148-157 are Periplasmic-facing; that stretch reads DPSTMQWATS. Residues 158–178 traverse the membrane as a helical segment; the sequence is SPVPSTFIGALIISIVAGYLV. Residues 179–197 lie on the Cytoplasmic side of the membrane; the sequence is KWMNQKIQLPDFLLAFKTT. Residues 198 to 218 traverse the membrane as a helical segment; the sequence is FLLPILSAIFVMLAMYYVITP. Over 219 to 237 the chain is Periplasmic; sequence FGGWINGGIRTVLTAAGEK. Residues 238 to 258 form a helical membrane-spanning segment; it reads GALMYAMGIAAATAIDLGGPI. The Cytoplasmic portion of the chain corresponds to 259–276; it reads NKAAGFVAFSFTTDHVLP. The chain crosses the membrane as a helical span at residues 277–297; that stretch reads VTARSIAIVIPPIGLGLATII. The Periplasmic segment spans residues 298-318; the sequence is DRRLTGKRLFNAQLYPQGKTA. The helical transmembrane segment at 319 to 339 threads the bilayer; that stretch reads MFLAFMGISEGAIPFALESPI. At 340–341 the chain is on the cytoplasmic side; it reads TA. The chain crosses the membrane as a helical span at residues 342 to 362; it reads IPSYMVGAIVGSTAAVWLGAV. The Periplasmic segment spans residues 363–378; it reads QWFPESAIWAWPLVTN. A helical transmembrane segment spans residues 379–399; sequence LGVYMAGIALGAIITALMVVF. Residues 400-415 are Cytoplasmic-facing; it reads LRLMMFRKGKLLIESL.

Its subcellular location is the cell inner membrane. Its function is as follows. The phosphoenolpyruvate-dependent sugar phosphotransferase system (PTS), a major carbohydrate active -transport system, catalyzes the phosphorylation of incoming sugar substrates concomitant with their translocation across the cell membrane. The polypeptide is Fructose-like permease IIC component (fryC) (Escherichia coli O6:H1 (strain CFT073 / ATCC 700928 / UPEC)).